Consider the following 304-residue polypeptide: Olfactory receptor 52A4 (304 aa).

Over M1 to G32 the chain is Extracellular. N-linked (GlcNAc...) asparagine glycosylation occurs at N7. The helical transmembrane segment at I33–I53 threads the bilayer. At K54–E61 the chain is on the cytoplasmic side. Residues P62–V82 form a helical membrane-spanning segment. Topologically, residues P83–F103 are extracellular. C101 and C184 are joined by a disulfide. A helical transmembrane segment spans residues Q104 to L124. Over D125–T146 the chain is Cytoplasmic. The helical transmembrane segment at Y147 to I167 threads the bilayer. Residues K168–Y203 lie on the Extracellular side of the membrane. A helical transmembrane segment spans residues G204 to I224. Over Q225–Q255 the chain is Cytoplasmic. The chain crosses the membrane as a helical span at residues F256–I276. Topologically, residues C277–Y279 are extracellular. The helical transmembrane segment at H280 to K300 threads the bilayer. At D301–H304 the chain is on the cytoplasmic side.

Belongs to the G-protein coupled receptor 1 family.

It localises to the cell membrane. Odorant receptor. In Homo sapiens (Human), this protein is Olfactory receptor 52A4.